Consider the following 452-residue polypeptide: Bifunctional protein GlmU (452 aa).

The pyrophosphorylase stretch occupies residues 1–226 (MSLTTVILAA…PMEVEGANNR (226 aa)). UDP-N-acetyl-alpha-D-glucosamine contacts are provided by residues 8-11 (LAAG), K22, Q73, 78-79 (GT), 100-102 (YGD), G137, E151, N166, and N224. D102 is a binding site for Mg(2+). N224 serves as a coordination point for Mg(2+). The segment at 227–247 (IQLAGLERAYQAWQAQELMLN) is linker. The tract at residues 248-452 (GATLADPARI…LDGWKRPVKK (205 aa)) is N-acetyltransferase. The UDP-N-acetyl-alpha-D-glucosamine site is built by R330 and K348. H360 functions as the Proton acceptor in the catalytic mechanism. Y363 and N374 together coordinate UDP-N-acetyl-alpha-D-glucosamine. Acetyl-CoA-binding positions include A377, 383 to 384 (NY), S402, A420, and R437.

In the N-terminal section; belongs to the N-acetylglucosamine-1-phosphate uridyltransferase family. It in the C-terminal section; belongs to the transferase hexapeptide repeat family. In terms of assembly, homotrimer. Mg(2+) serves as cofactor.

The protein resides in the cytoplasm. It carries out the reaction alpha-D-glucosamine 1-phosphate + acetyl-CoA = N-acetyl-alpha-D-glucosamine 1-phosphate + CoA + H(+). The catalysed reaction is N-acetyl-alpha-D-glucosamine 1-phosphate + UTP + H(+) = UDP-N-acetyl-alpha-D-glucosamine + diphosphate. The protein operates within nucleotide-sugar biosynthesis; UDP-N-acetyl-alpha-D-glucosamine biosynthesis; N-acetyl-alpha-D-glucosamine 1-phosphate from alpha-D-glucosamine 6-phosphate (route II): step 2/2. Its pathway is nucleotide-sugar biosynthesis; UDP-N-acetyl-alpha-D-glucosamine biosynthesis; UDP-N-acetyl-alpha-D-glucosamine from N-acetyl-alpha-D-glucosamine 1-phosphate: step 1/1. It functions in the pathway bacterial outer membrane biogenesis; LPS lipid A biosynthesis. Its function is as follows. Catalyzes the last two sequential reactions in the de novo biosynthetic pathway for UDP-N-acetylglucosamine (UDP-GlcNAc). The C-terminal domain catalyzes the transfer of acetyl group from acetyl coenzyme A to glucosamine-1-phosphate (GlcN-1-P) to produce N-acetylglucosamine-1-phosphate (GlcNAc-1-P), which is converted into UDP-GlcNAc by the transfer of uridine 5-monophosphate (from uridine 5-triphosphate), a reaction catalyzed by the N-terminal domain. The chain is Bifunctional protein GlmU from Pseudoalteromonas translucida (strain TAC 125).